We begin with the raw amino-acid sequence, 463 residues long: Cysteine--tRNA ligase (463 aa).

Residue Cys33 participates in Zn(2+) binding. The short motif at 35–45 (PTVYDFAHIGN) is the 'HIGH' region element. Zn(2+) is bound by residues Cys221, His246, and Glu250. The 'KMSKS' region motif lies at 279–283 (KMSKS). Lys282 provides a ligand contact to ATP.

The protein belongs to the class-I aminoacyl-tRNA synthetase family. Monomer. It depends on Zn(2+) as a cofactor.

It localises to the cytoplasm. The catalysed reaction is tRNA(Cys) + L-cysteine + ATP = L-cysteinyl-tRNA(Cys) + AMP + diphosphate. The protein is Cysteine--tRNA ligase of Rhizobium johnstonii (strain DSM 114642 / LMG 32736 / 3841) (Rhizobium leguminosarum bv. viciae).